The following is a 130-amino-acid chain: Small ribosomal subunit protein uS9 (130 aa).

It belongs to the universal ribosomal protein uS9 family.

This Paraburkholderia phymatum (strain DSM 17167 / CIP 108236 / LMG 21445 / STM815) (Burkholderia phymatum) protein is Small ribosomal subunit protein uS9.